Here is a 413-residue protein sequence, read N- to C-terminus: NADH-quinone oxidoreductase subunit D (413 aa).

The protein belongs to the complex I 49 kDa subunit family. NDH-1 is composed of 14 different subunits. Subunits NuoB, C, D, E, F, and G constitute the peripheral sector of the complex.

It localises to the cell inner membrane. It carries out the reaction a quinone + NADH + 5 H(+)(in) = a quinol + NAD(+) + 4 H(+)(out). Functionally, NDH-1 shuttles electrons from NADH, via FMN and iron-sulfur (Fe-S) centers, to quinones in the respiratory chain. The immediate electron acceptor for the enzyme in this species is believed to be ubiquinone. Couples the redox reaction to proton translocation (for every two electrons transferred, four hydrogen ions are translocated across the cytoplasmic membrane), and thus conserves the redox energy in a proton gradient. The sequence is that of NADH-quinone oxidoreductase subunit D from Rhodobacter capsulatus (Rhodopseudomonas capsulata).